Reading from the N-terminus, the 29-residue chain is GLPICGETCVGGSCNTPGCSCSWPVCTRN.

Residues 1-29 (GLPICGETCVGGSCNTPGCSCSWPVCTRN) constitute a cross-link (cyclopeptide (Gly-Asn)). Disulfide bonds link Cys5/Cys19, Cys9/Cys21, and Cys14/Cys26.

This is a cyclic peptide.

Its function is as follows. Probably participates in a plant defense mechanism. This chain is Varv peptide D, found in Viola arvensis (European field pansy).